The chain runs to 799 residues: Probable inorganic carbon transporter subunit DabA (799 aa).

Zn(2+)-binding residues include cysteine 303, aspartate 305, histidine 479, and cysteine 494. Positions 574 to 598 are disordered; it reads AGAAAERSEALNGADPDKGVSETAS.

This sequence belongs to the inorganic carbon transporter (TC 9.A.2) DabA family. In terms of assembly, forms a complex with DabB. Zn(2+) is required as a cofactor.

The protein resides in the cell membrane. Part of an energy-coupled inorganic carbon pump. The polypeptide is Probable inorganic carbon transporter subunit DabA (Natronomonas pharaonis (strain ATCC 35678 / DSM 2160 / CIP 103997 / JCM 8858 / NBRC 14720 / NCIMB 2260 / Gabara) (Halobacterium pharaonis)).